We begin with the raw amino-acid sequence, 104 residues long: Turripeptide OL55 (104 aa).

Post-translationally, contains 8 disulfide bonds. Expressed by the venom duct.

The protein localises to the secreted. Acts as a neurotoxin by inhibiting an ion channel. This is Turripeptide OL55 from Iotyrris olangoensis (Sea snail).